A 513-amino-acid chain; its full sequence is Activin receptor type-2A (513 aa).

An N-terminal signal peptide occupies residues 1 to 19 (MGAAAKLAFAVFLISCSSG). Residues 20-135 (AILGRSETQE…TSNPVTPKPP (116 aa)) lie on the Extracellular side of the membrane. Disulfide bonds link Cys-30/Cys-60, Cys-50/Cys-78, Cys-85/Cys-104, Cys-91/Cys-103, and Cys-105/Cys-110. N-linked (GlcNAc...) asparagine glycosylation is found at Asn-43 and Asn-66. Residues 136 to 161 (YYNILLYSLVPLMLIAGIVICAFWVY) traverse the membrane as a helical segment. Over 162-513 (RHHKMAYPPV…VDFPPKESSL (352 aa)) the chain is Cytoplasmic. The Protein kinase domain occupies 192–485 (LQLLEVKARG…GERITQMQRL (294 aa)). ATP contacts are provided by residues 198–206 (KARGRFGCV) and Lys-219. Catalysis depends on Asp-322, which acts as the Proton acceptor.

It belongs to the protein kinase superfamily. TKL Ser/Thr protein kinase family. TGFB receptor subfamily. Part of a complex consisting of MAGI2/ARIP1, ACVR2A, ACVR1B and SMAD3. Interacts with MAGI2/ARIP1. Interacts with type I receptor ACVR1. Interacts with BMP7. Interacts with TSC22D1/TSC-22. Interacts with activin A/INHBA. Requires Mg(2+) as cofactor. Mn(2+) is required as a cofactor.

The protein localises to the cell membrane. The catalysed reaction is L-threonyl-[receptor-protein] + ATP = O-phospho-L-threonyl-[receptor-protein] + ADP + H(+). The enzyme catalyses L-seryl-[receptor-protein] + ATP = O-phospho-L-seryl-[receptor-protein] + ADP + H(+). In terms of biological role, on ligand binding, forms a receptor complex consisting of two type II and two type I transmembrane serine/threonine kinases. Type II receptors phosphorylate and activate type I receptors which autophosphorylate, then bind and activate SMAD transcriptional regulators. Receptor for activin A, activin B and inhibin A. Mediates induction of adipogenesis by GDF6. This Homo sapiens (Human) protein is Activin receptor type-2A.